A 119-amino-acid chain; its full sequence is Small ribosomal subunit protein uS13m (119 aa).

The protein belongs to the universal ribosomal protein uS13 family. In terms of assembly, part of the small ribosomal subunit.

The protein localises to the mitochondrion. Located at the top of the head of the small subunit, it contacts several helices of the small subunit rRNA. The chain is Small ribosomal subunit protein uS13m (RPS13) from Prototheca wickerhamii.